Reading from the N-terminus, the 367-residue chain is UDP-N-acetylglucosamine--N-acetylmuramyl-(pentapeptide) pyrophosphoryl-undecaprenol N-acetylglucosamine transferase (367 aa).

UDP-N-acetyl-alpha-D-glucosamine contacts are provided by residues 11 to 13 (TAG), Asn125, Arg163, Ser197, and Gln289.

The protein belongs to the glycosyltransferase 28 family. MurG subfamily.

It is found in the cell membrane. It catalyses the reaction di-trans,octa-cis-undecaprenyl diphospho-N-acetyl-alpha-D-muramoyl-L-alanyl-D-glutamyl-meso-2,6-diaminopimeloyl-D-alanyl-D-alanine + UDP-N-acetyl-alpha-D-glucosamine = di-trans,octa-cis-undecaprenyl diphospho-[N-acetyl-alpha-D-glucosaminyl-(1-&gt;4)]-N-acetyl-alpha-D-muramoyl-L-alanyl-D-glutamyl-meso-2,6-diaminopimeloyl-D-alanyl-D-alanine + UDP + H(+). Its pathway is cell wall biogenesis; peptidoglycan biosynthesis. Its function is as follows. Cell wall formation. Catalyzes the transfer of a GlcNAc subunit on undecaprenyl-pyrophosphoryl-MurNAc-pentapeptide (lipid intermediate I) to form undecaprenyl-pyrophosphoryl-MurNAc-(pentapeptide)GlcNAc (lipid intermediate II). The sequence is that of UDP-N-acetylglucosamine--N-acetylmuramyl-(pentapeptide) pyrophosphoryl-undecaprenol N-acetylglucosamine transferase from Clavibacter sepedonicus (Clavibacter michiganensis subsp. sepedonicus).